Reading from the N-terminus, the 414-residue chain is Probable sugar phosphate/phosphate translocator At1g06470 (414 aa).

The next 9 helical transmembrane spans lie at 72–92 (VLKTLFFILVWYTFSTFLTLY), 101–121 (LGKFPAPLLMNTIHFSIQAVL), 172–192 (TFATMCKSAAPIFLLLFAFAF), 197–217 (PSLKLFGIISVISAGVLLTVA), 224–244 (FWGFVFVMLAAVMSGFRWCMT), 259–279 (FIFMSCVAPVMAIATGLLSLL), 303–323 (FLMLFGGALAFCMVLTEYVLV), 328–348 (AVTVTIAGVVKEAVTIVVAVF), and 354–374 (FTWLKGVGLMIIMVGVSLFNW). The EamA domain occupies 106–216 (APLLMNTIHF…VISAGVLLTV (111 aa)).

The protein belongs to the TPT transporter family. TPT (TC 2.A.7.9) subfamily.

It localises to the membrane. This Arabidopsis thaliana (Mouse-ear cress) protein is Probable sugar phosphate/phosphate translocator At1g06470.